Consider the following 335-residue polypeptide: Glucan endo-1,3-beta-glucosidase, acidic isoform (335 aa).

The N-terminal stretch at 1-29 (MARQGVIASMHALALLLGAFAAIPTGVQS) is a signal peptide. The active-site Proton donor is the E122. E259 functions as the Nucleophile in the catalytic mechanism.

This sequence belongs to the glycosyl hydrolase 17 family. Accumulates in aleurone layers. Much lower levels are found in the embryo, and none in starchy endosperm.

It localises to the secreted. Its subcellular location is the extracellular space. The enzyme catalyses Hydrolysis of (1-&gt;3)-beta-D-glucosidic linkages in (1-&gt;3)-beta-D-glucans.. Functionally, is thought to be an important plant defense-related product against fungal pathogens. The polypeptide is Glucan endo-1,3-beta-glucosidase, acidic isoform (Zea mays (Maize)).